The sequence spans 203 residues: Tic20 family protein Ycf60 (203 aa).

5 helical membrane passes run 2-22, 51-71, 84-104, 131-151, and 153-173; these read IRLF…RLAL, TVPY…YVLP, IILP…VTFF, ILLF…PIEF, and ISFL…STIT.

The protein belongs to the Tic20 family.

The protein localises to the plastid. It localises to the chloroplast membrane. This chain is Tic20 family protein Ycf60 (ycf60), found in Pyropia yezoensis (Susabi-nori).